The primary structure comprises 377 residues: Spore coat protein SA (377 aa).

Belongs to the glycosyltransferase group 1 family. Glycosyltransferase 4 subfamily.

This is Spore coat protein SA (cotSA) from Bacillus subtilis (strain 168).